The chain runs to 411 residues: Arginine deiminase (411 aa).

The active-site Amidino-cysteine intermediate is Cys-401.

Belongs to the arginine deiminase family.

The protein localises to the cytoplasm. It catalyses the reaction L-arginine + H2O = L-citrulline + NH4(+). It functions in the pathway amino-acid degradation; L-arginine degradation via ADI pathway; carbamoyl phosphate from L-arginine: step 1/2. The chain is Arginine deiminase from Streptococcus equi subsp. equi (strain 4047).